The following is a 754-amino-acid chain: 1,4-alpha-glucan branching enzyme GlgB (754 aa).

Aspartate 431 functions as the Nucleophile in the catalytic mechanism. Catalysis depends on glutamate 484, which acts as the Proton donor.

Belongs to the glycosyl hydrolase 13 family. GlgB subfamily. Monomer.

The enzyme catalyses Transfers a segment of a (1-&gt;4)-alpha-D-glucan chain to a primary hydroxy group in a similar glucan chain.. It participates in glycan biosynthesis; glycogen biosynthesis. Functionally, catalyzes the formation of the alpha-1,6-glucosidic linkages in glycogen by scission of a 1,4-alpha-linked oligosaccharide from growing alpha-1,4-glucan chains and the subsequent attachment of the oligosaccharide to the alpha-1,6 position. This Prochlorococcus marinus subsp. pastoris (strain CCMP1986 / NIES-2087 / MED4) protein is 1,4-alpha-glucan branching enzyme GlgB.